The sequence spans 254 residues: UPF0246 protein CPE2152 (254 aa).

It belongs to the UPF0246 family.

This is UPF0246 protein CPE2152 from Clostridium perfringens (strain 13 / Type A).